Here is a 106-residue protein sequence, read N- to C-terminus: Antitoxin MazE3 (106 aa).

As to quaternary structure, forms a complex with cognate toxin MazF3, possibly with 1:1 stoichiometry.

Antitoxin component of a type II toxin-antitoxin (TA) system. Upon expression in E.coli and M.smegmatis neutralizes the effect of cognate toxin MazF3. Overexpression of MazE3 alone decreased persister cells formation in M.smegmatis upon challenge with gentamicin or kanamycin. This Mycobacterium tuberculosis (strain ATCC 25618 / H37Rv) protein is Antitoxin MazE3 (mazE3).